We begin with the raw amino-acid sequence, 230 residues long: Ureidoacrylate amidohydrolase RutB (230 aa).

The active-site Proton acceptor is the D24. Residue K133 is part of the active site. C166 serves as the catalytic Nucleophile.

The protein belongs to the isochorismatase family. RutB subfamily.

The catalysed reaction is (Z)-3-ureidoacrylate + H2O + H(+) = (Z)-3-aminoacrylate + NH4(+) + CO2. It carries out the reaction (Z)-3-ureidoacrylate + H2O = (Z)-3-aminoacrylate + carbamate + H(+). It catalyses the reaction (Z)-2-methylureidoacrylate + H2O + H(+) = (Z)-2-methylaminoacrylate + NH4(+) + CO2. In terms of biological role, hydrolyzes ureidoacrylate to form aminoacrylate and carbamate. The carbamate hydrolyzes spontaneously, thereby releasing one of the nitrogen atoms of the pyrimidine ring as ammonia and one of its carbon atoms as CO2. The polypeptide is Ureidoacrylate amidohydrolase RutB (Escherichia coli O81 (strain ED1a)).